We begin with the raw amino-acid sequence, 603 residues long: Protein regulator of cytokinesis 1 (603 aa).

Residues 1–341 (MRRSEVLADE…HLHDAEIVRL (341 aa)) are dimerization. 5 coiled-coil regions span residues 34 to 65 (EQRL…RERL), 96 to 136 (ILQL…DILC), 211 to 246 (SLEN…IREL), 272 to 304 (RNAL…LAQF), and 383 to 463 (GNLL…AEML). Residues 342 to 466 (RNYYDVHKEL…QTEAEMLYGS (125 aa)) are spectrin-fold. Residues 447-459 (KQERQLKNKKQTE) show a composition bias toward basic and acidic residues. Positions 447 to 502 (KQERQLKNKKQTEAEMLYGSTPRTPSKRPGQTPKKSGKMNTTTMSSATPNSSIRPV) are disordered. The unstructured, Arg/Lys rich stretch occupies residues 467–603 (TPRTPSKRPG…RILNSTNIQS (137 aa)). A Phosphothreonine; by CDK1 modification is found at T470. Positions 484–499 (KMNTTTMSSATPNSSI) are enriched in polar residues. 2 positions are modified to phosphoserine: S510 and S568. The residue at position 575 (T575) is a Phosphothreonine. A disordered region spans residues 583 to 603 (LSKASRSDATSRILNSTNIQS). Over residues 589 to 603 (SDATSRILNSTNIQS) the composition is skewed to polar residues. Phosphothreonine; by PLK1 is present on T599.

The protein belongs to the MAP65/ASE1 family. Homodimer. Interacts with the C-terminal Rho-GAP domain and the basic region of RACGAP1. The interaction with RACGAP1 inhibits its GAP activity towards CDC42 in vitro, which may be required for maintaining normal spindle morphology. Interacts (via N-terminus) with the C-terminus of CENPE (via C-terminus); the interaction occurs during late mitosis. Interacts (via N-terminus) with KIF4A (via C-terminus); the interaction is required for the progression of mitosis. Interacts (via N-terminus) with KIF23 (via C-terminus); the interaction occurs during late mitosis. Interacts with KIF14 and KIF20A. Interacts with PLK1. Interacts with KIF20B. Interacts with CCDC66. Post-translationally, phosphorylation by CDK1 in early mitosis holds PRC1 in an inactive monomeric state, during the metaphase to anaphase transition, PRC1 is dephosphorylated, promoting interaction with KIF4A, which then translocates PRC1 along mitotic spindles to the plus ends of antiparallel interdigitating microtubules. Dephosphorylation also promotes MT-bundling activity by allowing dimerization. Phosphorylation by CDK1 prevents PLK1-binding: upon degradation of CDK1 at anaphase and dephosphorylation, it is then phosphorylated by PLK1, leading to cytokinesis.

It localises to the nucleus. Its subcellular location is the cytoplasm. It is found in the cytoskeleton. The protein resides in the spindle pole. The protein localises to the midbody. In terms of biological role, key regulator of cytokinesis that cross-links antiparrallel microtubules at an average distance of 35 nM. Essential for controlling the spatiotemporal formation of the midzone and successful cytokinesis. Required for KIF14 localization to the central spindle and midbody. Required to recruit PLK1 to the spindle. Stimulates PLK1 phosphorylation of RACGAP1 to allow recruitment of ECT2 to the central spindle. Acts as an oncogene for promoting bladder cancer cells proliferation, apoptosis inhibition and carcinogenic progression. This is Protein regulator of cytokinesis 1 from Mus musculus (Mouse).